The primary structure comprises 80 residues: Exodeoxyribonuclease 7 small subunit (80 aa).

This sequence belongs to the XseB family. As to quaternary structure, heterooligomer composed of large and small subunits.

It localises to the cytoplasm. It catalyses the reaction Exonucleolytic cleavage in either 5'- to 3'- or 3'- to 5'-direction to yield nucleoside 5'-phosphates.. Its function is as follows. Bidirectionally degrades single-stranded DNA into large acid-insoluble oligonucleotides, which are then degraded further into small acid-soluble oligonucleotides. The sequence is that of Exodeoxyribonuclease 7 small subunit from Pseudomonas aeruginosa (strain LESB58).